Reading from the N-terminus, the 140-residue chain is Large ribosomal subunit protein uL14 (140 aa).

Serine 17 is modified (phosphoserine). Residue tyrosine 38 is modified to Phosphotyrosine.

Belongs to the universal ribosomal protein uL14 family. In terms of assembly, component of the large ribosomal subunit.

It is found in the cytoplasm. Component of the large ribosomal subunit. The ribosome is a large ribonucleoprotein complex responsible for the synthesis of proteins in the cell. The protein is Large ribosomal subunit protein uL14 (RPL23) of Pongo abelii (Sumatran orangutan).